The primary structure comprises 601 residues: Proteasome-associated ATPase (601 aa).

A compositionally biased stretch (gly residues) spans Met-1–Gly-15. The interval Met-1–Lys-29 is disordered. Residues Gly-18–Lys-29 show a composition bias toward basic and acidic residues. Residues Asp-19–Gln-106 are a coiled coil. Gly-289–Leu-294 lines the ATP pocket. The tract at residues Tyr-600–Leu-601 is docks into pockets in the proteasome alpha-ring.

Belongs to the AAA ATPase family. Homohexamer. Assembles into a hexameric ring structure that caps the 20S proteasome core. Strongly interacts with the prokaryotic ubiquitin-like protein Pup through a hydrophobic interface; the interacting region of ARC lies in its N-terminal coiled-coil domain. There is one Pup binding site per ARC hexamer ring. Upon ATP-binding, the C-terminus of ARC interacts with the alpha-rings of the proteasome core, possibly by binding to the intersubunit pockets.

It functions in the pathway protein degradation; proteasomal Pup-dependent pathway. Its function is as follows. ATPase which is responsible for recognizing, binding, unfolding and translocation of pupylated proteins into the bacterial 20S proteasome core particle. May be essential for opening the gate of the 20S proteasome via an interaction with its C-terminus, thereby allowing substrate entry and access to the site of proteolysis. Thus, the C-termini of the proteasomal ATPase may function like a 'key in a lock' to induce gate opening and therefore regulate proteolysis. This Parafrankia sp. (strain EAN1pec) protein is Proteasome-associated ATPase.